The chain runs to 435 residues: ATP-dependent protease ATPase subunit HslU (435 aa).

ATP contacts are provided by residues isoleucine 18, 60-65 (GVGKTE), aspartate 248, glutamate 313, and arginine 385.

It belongs to the ClpX chaperone family. HslU subfamily. As to quaternary structure, a double ring-shaped homohexamer of HslV is capped on each side by a ring-shaped HslU homohexamer. The assembly of the HslU/HslV complex is dependent on binding of ATP.

Its subcellular location is the cytoplasm. Its function is as follows. ATPase subunit of a proteasome-like degradation complex; this subunit has chaperone activity. The binding of ATP and its subsequent hydrolysis by HslU are essential for unfolding of protein substrates subsequently hydrolyzed by HslV. HslU recognizes the N-terminal part of its protein substrates and unfolds these before they are guided to HslV for hydrolysis. The polypeptide is ATP-dependent protease ATPase subunit HslU (Agrobacterium fabrum (strain C58 / ATCC 33970) (Agrobacterium tumefaciens (strain C58))).